The chain runs to 79 residues: Protein SIP18 (79 aa).

A disordered region spans residues 1–79 (MSNMMNKFAE…DWKTYENMKK (79 aa)). The segment covering 8-20 (FAEKLQGNDDSHQ) has biased composition (basic and acidic residues).

This Saccharomyces cerevisiae (strain ATCC 204508 / S288c) (Baker's yeast) protein is Protein SIP18 (SIP18).